Here is a 445-residue protein sequence, read N- to C-terminus: GTPase Der (445 aa).

EngA-type G domains are found at residues Pro-3–Gln-167 and Ile-180–Met-353. GTP-binding positions include Gly-9 to Ser-16, Asp-56 to Phe-60, Asn-119 to Glu-122, Gly-186 to Ser-193, Asp-233 to Leu-237, and Asn-298 to Asp-301. In terms of domain architecture, KH-like spans Ser-354–Asn-438.

This sequence belongs to the TRAFAC class TrmE-Era-EngA-EngB-Septin-like GTPase superfamily. EngA (Der) GTPase family. As to quaternary structure, associates with the 50S ribosomal subunit.

Functionally, GTPase that plays an essential role in the late steps of ribosome biogenesis. This Burkholderia cenocepacia (strain ATCC BAA-245 / DSM 16553 / LMG 16656 / NCTC 13227 / J2315 / CF5610) (Burkholderia cepacia (strain J2315)) protein is GTPase Der.